The sequence spans 138 residues: Basic phospholipase A2 homolog TM-N49 (138 aa).

Residues 1-16 form the signal peptide; the sequence is MRTLWIMAVLLLGVEG. Intrachain disulfides connect Cys42-Cys131, Cys44-Cys60, Cys59-Cys111, Cys65-Cys138, Cys66-Cys104, Cys73-Cys97, and Cys91-Cys102.

This sequence belongs to the phospholipase A2 family. Group II subfamily. N49 sub-subfamily. Homodimer; non-covalently linked. In terms of tissue distribution, expressed by the venom gland.

It localises to the secreted. Functionally, snake venom phospholipase A2 (PLA2) that exhibits potent myotoxic activity causing inflammatory cell infiltration, severe myoedema, myonecrosis and myolysis in the gastrocnemius muscles of BALB/c mice. This is Basic phospholipase A2 homolog TM-N49 from Protobothrops mucrosquamatus (Taiwan habu).